We begin with the raw amino-acid sequence, 276 residues long: Light-independent protochlorophyllide reductase iron-sulfur ATP-binding protein (276 aa).

ATP contacts are provided by residues 12-17 (GIGKST) and Lys-41. A Mg(2+)-binding site is contributed by Ser-16. [4Fe-4S] cluster contacts are provided by Cys-97 and Cys-131. 182-183 (NR) is an ATP binding site.

Belongs to the NifH/BchL/ChlL family. As to quaternary structure, homodimer. Protochlorophyllide reductase is composed of three subunits; BchL, BchN and BchB. It depends on [4Fe-4S] cluster as a cofactor.

It catalyses the reaction chlorophyllide a + oxidized 2[4Fe-4S]-[ferredoxin] + 2 ADP + 2 phosphate = protochlorophyllide a + reduced 2[4Fe-4S]-[ferredoxin] + 2 ATP + 2 H2O. The protein operates within porphyrin-containing compound metabolism; bacteriochlorophyll biosynthesis (light-independent). Its function is as follows. Component of the dark-operative protochlorophyllide reductase (DPOR) that uses Mg-ATP and reduced ferredoxin to reduce ring D of protochlorophyllide (Pchlide) to form chlorophyllide a (Chlide). This reaction is light-independent. The L component serves as a unique electron donor to the NB-component of the complex, and binds Mg-ATP. This is Light-independent protochlorophyllide reductase iron-sulfur ATP-binding protein from Chlorobium chlorochromatii (strain CaD3).